A 455-amino-acid polypeptide reads, in one-letter code: Vimentin (455 aa).

The interval Met-1–Phe-87 is head. The stretch at Phe-87–Leu-122 forms a coiled coil. The coil 1A stretch occupies residues Lys-88 to Leu-122. Residues Glu-94–Ile-402 enclose the IF rod domain. A linker 1 region spans residues Ile-123–Glu-144. Residues Met-145–Leu-236 adopt a coiled-coil conformation. The segment at Met-145–Leu-236 is coil 1B. A linker 12 region spans residues Gln-237 to Ala-259. Residues Leu-260–Glu-398 form a coil 2 region. The stretch at Ala-294 to Glu-398 forms a coiled coil. The segment at Glu-399–Glu-455 is tail.

This sequence belongs to the intermediate filament family. Homomer assembled from elementary dimers. Post-translationally, one of the most prominent phosphoproteins in various cells of mesenchymal origin. Phosphorylation is enhanced during cell division, at which time vimentin filaments are significantly reorganized.

It localises to the cytoplasm. The protein localises to the cytoskeleton. The protein resides in the nucleus matrix. Vimentins are class-III intermediate filaments found in various non-epithelial cells, especially mesenchymal cells. Vimentin is attached to the nucleus, endoplasmic reticulum, and mitochondria, either laterally or terminally. This Cyprinus carpio (Common carp) protein is Vimentin (vim).